The primary structure comprises 231 residues: Ribonuclease 3 (231 aa).

In terms of domain architecture, RNase III spans 5-134; that stretch reads QKKLKNDYGL…FLGALFIDQG (130 aa). Position 47 (Glu-47) interacts with Mg(2+). Asp-51 is an active-site residue. 2 residues coordinate Mg(2+): Asn-120 and Glu-123. Residue Glu-123 is part of the active site. Residues 160 to 229 enclose the DRBM domain; that stretch reads DYKTELQEVL…AENAIKGQNH (70 aa).

This sequence belongs to the ribonuclease III family. In terms of assembly, homodimer. It depends on Mg(2+) as a cofactor.

It localises to the cytoplasm. It carries out the reaction Endonucleolytic cleavage to 5'-phosphomonoester.. Its function is as follows. Digests double-stranded RNA. Involved in the processing of primary rRNA transcript to yield the immediate precursors to the large and small rRNAs (23S and 16S). Processes some mRNAs, and tRNAs when they are encoded in the rRNA operon. Processes pre-crRNA and tracrRNA of type II CRISPR loci if present in the organism. The chain is Ribonuclease 3 from Lactococcus lactis subsp. cremoris (strain MG1363).